The sequence spans 450 residues: Crinkler effector protein 63 (450 aa).

A signal peptide spans 1–17; it reads MVKLFCAIVGAAGSAFP. Residues 18-55 are LQLFLAK domain; sequence VDIDAGQSAGDLKDAIKAKNPATITCDAKDLQLSLAKT. The DWL domain stretch occupies residues 58–117; sequence GAWLPDDDQAALDLEDGKVHEDIQALIDGEKMKATWTIEDVLTANNMTKRKGRAPKSRQI. Asn103 carries an N-linked (GlcNAc...) asparagine glycan. The HVLVXXP motif signature appears at 118-124; sequence HVLVVVP. An effector domain region spans residues 125–450; the sequence is EGAFGSASET…RSIPTFSYFS (326 aa). The short motif at 218–224 is the Nuclear localization signal (NLS) element; that stretch reads QRKRYRR. N-linked (GlcNAc...) asparagine glycosylation is present at Asn342.

This sequence belongs to the Crinkler effector family. In terms of assembly, forms a homodimer via an inverted association manner. Forms heterodimers with CRN79 and CRN115.

The protein localises to the secreted. The protein resides in the host nucleus. Its subcellular location is the host nucleoplasm. In terms of biological role, secreted effector that, with CRN115, is critical to pathogenesis by modulating host defenses. Induces cell death in plant host cells. Suppresses callose deposition and affects expression of defense-related genes including two salicylic acid (SA) signal-induced and antimicrobial PR genes (PR1 and PR2), and genes involved in jasmonic acid (JA)/ethylene (ET)-mediated defense pathway (ERF1, ORA59, PDF1.2). CRN115 and CRN63 may share the same molecular host targets that are involved in the cell death signal transduction pathway and that their differential activities are dependent on plant nuclear localization or not. Does not affect MAPK activation and BIK1 phosphorylation and acts downstream of the MAPK cascades in PTI signaling. This chain is Crinkler effector protein 63, found in Phytophthora sojae (strain P6497) (Soybean stem and root rot agent).